The primary structure comprises 325 residues: Beta-ketoacyl-[acyl-carrier-protein] synthase III (325 aa).

Catalysis depends on residues Cys116 and His252. An ACP-binding region spans residues 253–257; sequence QANLR. The active site involves Asn282.

This sequence belongs to the thiolase-like superfamily. FabH family. In terms of assembly, homodimer.

The protein localises to the cytoplasm. It catalyses the reaction malonyl-[ACP] + acetyl-CoA + H(+) = 3-oxobutanoyl-[ACP] + CO2 + CoA. It participates in lipid metabolism; fatty acid biosynthesis. Its function is as follows. Catalyzes the condensation reaction of fatty acid synthesis by the addition to an acyl acceptor of two carbons from malonyl-ACP. Catalyzes the first condensation reaction which initiates fatty acid synthesis and may therefore play a role in governing the total rate of fatty acid production. Possesses both acetoacetyl-ACP synthase and acetyl transacylase activities. Its substrate specificity determines the biosynthesis of branched-chain and/or straight-chain of fatty acids. The chain is Beta-ketoacyl-[acyl-carrier-protein] synthase III from Xanthomonas campestris pv. campestris (strain ATCC 33913 / DSM 3586 / NCPPB 528 / LMG 568 / P 25).